The primary structure comprises 371 residues: MSNQHTLLMTNLLPVGSNISTWWNFGSMLLTCLALQTMTGFFLAIHYTANINLAFASVIHITRDIPYGWTMQSLHAIGASLFFICIYIHIARGLYYGLYMNKEVWLSGITLLFTLMATAFFGYVLPWGQMSFWAATVITNLLTAIPYLGTMLTTWLWGGFSINDPTLTRFFALHFILPFIIISLSSAHIMLLHTEGSNNPLGTNSDIDKIPFHPYHSNKDMLTATIMITMLFITLSFLPNLLNDPENFSKANPMITPQHIKPEWYFLFAYGILRSIPNKLGGTLALLTSVMILATTPFTHTSHIRSMTFRPMTQTLFWILIATLITITWTATKPVEPPFMFISQMASMIYFSFFFMNPLLGWTENKIMMNN.

Transmembrane regions (helical) follow at residues Phe-25 to Ile-45, Trp-69 to Ile-90, Trp-105 to Leu-125, and Phe-170 to Met-190. Positions 75 and 89 each coordinate heme b. Heme b is bound by residues His-174 and His-188. His-193 lines the a ubiquinone pocket. A run of 4 helical transmembrane segments spans residues Asn-218 to Leu-238, Leu-280 to His-300, Met-312 to Thr-332, and Phe-339 to Pro-358.

This sequence belongs to the cytochrome b family. In terms of assembly, the cytochrome bc1 complex contains 3 respiratory subunits (MT-CYB, CYC1 and UQCRFS1), 2 core proteins (UQCRC1 and UQCRC2) and probably 6 low-molecular weight proteins. It depends on heme b as a cofactor.

It is found in the mitochondrion inner membrane. In terms of biological role, component of the ubiquinol-cytochrome c reductase complex (complex III or cytochrome b-c1 complex) that is part of the mitochondrial respiratory chain. The b-c1 complex mediates electron transfer from ubiquinol to cytochrome c. Contributes to the generation of a proton gradient across the mitochondrial membrane that is then used for ATP synthesis. The sequence is that of Cytochrome b (MT-CYB) from Elapsoidea nigra (Usambara garter snake).